Consider the following 1397-residue polypeptide: ABC transporter G family member 41 (1397 aa).

Residues 138–411 (SLSKFVCSKK…FEGCGFKCPE (274 aa)) enclose the ABC transporter 1 domain. Position 171-178 (171-178 (GPPGCGKT)) interacts with ATP. The ABC transmembrane type-2 1 domain maps to 489–701 (EMLKACSRRE…AEIGLTANEF (213 aa)). 6 helical membrane-spanning segments follow: residues 507 to 527 (FIYLFKSGLLVFNALVTMTVF), 549 to 570 (ALFRLLADGLPELTLTISRLGV), 594 to 614 (IPLSVLDSFIWTVLTYYVIGY), 625 to 645 (FIILLTFHLSCISMFRAIASI), 651 to 671 (ACSITGAISVLLLALFGGFVI), and 735 to 755 (TAFGALVGFVLFFNALYTLAL). The ABC transporter 2 domain occupies 805–1050 (VTFQNVQYYI…VIKYFESIPG (246 aa)). An ATP-binding site is contributed by 842 to 849 (GVSGAGKT). Residues 1122-1336 (GQLKACLWKQ…VLEGLLSSQY (215 aa)) enclose the ABC transmembrane type-2 2 domain. 7 consecutive transmembrane segments (helical) span residues 1141–1161 (HNLTRIVFILLNSLLCSLLFW), 1173–1193 (LFSIFGSMYTIVIFSGINNCA), 1229–1249 (VPYSLLQSLLCTIIVYPMIGY), 1260–1280 (LYSIFCSLLIFNYCGMLMVAL), 1286–1306 (MALTLRSTFFSMVNLFAGFVM), 1314–1334 (WWIWMYYLSPTSWVLEGLLSS), and 1369–1389 (VVAFVLIAFPIIVASLFAFFM).

It belongs to the ABC transporter superfamily. ABCG family. PDR (TC 3.A.1.205) subfamily. Confined to roots.

It localises to the membrane. May be a general defense protein. The chain is ABC transporter G family member 41 (ABCG41) from Arabidopsis thaliana (Mouse-ear cress).